Consider the following 422-residue polypeptide: 5-hydroxytryptamine receptor 1A (422 aa).

The disordered stretch occupies residues 1–23; it reads MDVLSPGQGNNTTSPPAPFETGG. The Extracellular portion of the chain corresponds to 1-38; sequence MDVLSPGQGNNTTSPPAPFETGGNTTGISDVTFSYQVI. N-linked (GlcNAc...) asparagine glycans are attached at residues Asn-10, Asn-11, and Asn-24. A helical transmembrane segment spans residues 39–59; that stretch reads TSLLLGTLIFCAVLGNACVVA. At 60–73 the chain is on the cytoplasmic side; that stretch reads AIALERSLQNVANY. Residues 74 to 98 form a helical membrane-spanning segment; sequence LIGSLAVTDLMVSVLVLPMAALYQV. Over 99 to 107 the chain is Extracellular; that stretch reads LNKWTLGQV. Residues 108–132 form a helical membrane-spanning segment; it reads TCDLFIALDVLCCTSSILHLCAIAL. The cysteines at positions 109 and 187 are disulfide-linked. Serotonin is bound by residues Asp-116 and Cys-120. The short motif at 133–135 is the DRY motif; important for ligand-induced conformation changes element; it reads DRY. Over 133–152 the chain is Cytoplasmic; sequence DRYWAITDPIDYVNKRTPRR. A helical membrane pass occupies residues 153 to 174; that stretch reads AAALISLTWLIGFLISIPPMLG. At 175 to 193 the chain is on the extracellular side; it reads WRTPEDRSDPDACTISKDH. A helical membrane pass occupies residues 194 to 216; that stretch reads GYTIYSTFGAFYIPLLLMLVLYG. Residues 217–346 are Cytoplasmic-facing; sequence RIFRAARFRI…LARERKTVKT (130 aa). Residues 235 to 262 are disordered; the sequence is KTGADTRHGASPAPQPKKSVNGESGSRN. Residues Thr-314, Lys-345, Thr-346, and Gly-352 each coordinate 1D-myo-inositol 4-phosphate. Residues 347 to 370 traverse the membrane as a helical segment; it reads LGIIMGTFILCWLPFFIVALVLPF. The Extracellular portion of the chain corresponds to 371–378; that stretch reads CESSCHMP. Residues 379–403 form a helical membrane-spanning segment; that stretch reads TLLGAIINWLGYSNSLLNPVIYAYF. The NPxxY motif; important for ligand-induced conformation changes and signaling signature appears at 396 to 400; sequence NPVIY. 1D-myo-inositol 4-phosphate is bound by residues Phe-403, Asn-404, and Lys-405. Residues 404–422 are Cytoplasmic-facing; it reads NKDFQNAFKKIIKCKFCRQ.

Belongs to the G-protein coupled receptor 1 family. 5-hydroxytryptamine receptor subfamily. HTR1A sub-subfamily. Heterodimer; heterodimerizes with GPER1. Interacts with YIF1B. Interacts with GPR39 and GALR1.

Its subcellular location is the cell membrane. The protein resides in the cell projection. The protein localises to the dendrite. G-protein coupled receptor activity is regulated by lipids: phosphatidylinositol 4-phosphate increases HTR1A-mediated activity. Functionally, G-protein coupled receptor for 5-hydroxytryptamine (serotonin). Also functions as a receptor for various drugs and psychoactive substances. Ligand binding causes a conformation change that triggers signaling via guanine nucleotide-binding proteins (G proteins) and modulates the activity of downstream effectors, such as adenylate cyclase. HTR1A is coupled to G(i)/G(o) G alpha proteins and mediates inhibitory neurotransmission: signaling inhibits adenylate cyclase activity and activates a phosphatidylinositol-calcium second messenger system that regulates the release of Ca(2+) ions from intracellular stores. Beta-arrestin family members regulate signaling by mediating both receptor desensitization and resensitization processes. This is 5-hydroxytryptamine receptor 1A (HTR1A) from Gorilla gorilla gorilla (Western lowland gorilla).